The chain runs to 395 residues: Demethylmacrocin O-methyltransferase (395 aa).

It carries out the reaction demethylmacrocin + S-adenosyl-L-methionine = macrocin + S-adenosyl-L-homocysteine + H(+). It functions in the pathway antibiotic biosynthesis; tylosin biosynthesis. Functionally, O-methyltransferase that catalyzes the conversion of demethylmacrocin to macrocin, the penultimate step of tylosin antibiotic biosynthesis. Also able to mediate the conversion of demethyllactenocin to lactenocin. This chain is Demethylmacrocin O-methyltransferase (tylE), found in Streptomyces fradiae (Streptomyces roseoflavus).